Here is a 380-residue protein sequence, read N- to C-terminus: Cytochrome b (380 aa).

The next 4 membrane-spanning stretches (helical) occupy residues 33-53 (FGSL…FLAM), 77-98 (WLIR…YLHV), 113-133 (WNIG…GYVL), and 178-198 (FFAF…IHLL). Heme b contacts are provided by His83 and His97. Heme b is bound by residues His182 and His196. His201 contacts a ubiquinone. 4 consecutive transmembrane segments (helical) span residues 226-246 (YKDM…TLFT), 288-308 (LGGV…PILH), 320-340 (ITQM…WIGG), and 347-367 (FMTI…ILIP).

The protein belongs to the cytochrome b family. As to quaternary structure, the cytochrome bc1 complex contains 3 respiratory subunits (MT-CYB, CYC1 and UQCRFS1), 2 core proteins (UQCRC1 and UQCRC2) and probably 6 low-molecular weight proteins. It depends on heme b as a cofactor.

Its subcellular location is the mitochondrion inner membrane. Component of the ubiquinol-cytochrome c reductase complex (complex III or cytochrome b-c1 complex) that is part of the mitochondrial respiratory chain. The b-c1 complex mediates electron transfer from ubiquinol to cytochrome c. Contributes to the generation of a proton gradient across the mitochondrial membrane that is then used for ATP synthesis. The sequence is that of Cytochrome b (mt-cyb) from Latimeria chalumnae (Coelacanth).